Here is a 212-residue protein sequence, read N- to C-terminus: Imidazole glycerol phosphate synthase subunit HisH 2 (212 aa).

One can recognise a Glutamine amidotransferase type-1 domain in the interval 4-211; sequence HLGLIDYGMG…LDWLQRGAPI (208 aa). The active-site Nucleophile is the Cys82. Catalysis depends on residues His186 and Glu188.

In terms of assembly, heterodimer of HisH and HisF.

It is found in the cytoplasm. The catalysed reaction is 5-[(5-phospho-1-deoxy-D-ribulos-1-ylimino)methylamino]-1-(5-phospho-beta-D-ribosyl)imidazole-4-carboxamide + L-glutamine = D-erythro-1-(imidazol-4-yl)glycerol 3-phosphate + 5-amino-1-(5-phospho-beta-D-ribosyl)imidazole-4-carboxamide + L-glutamate + H(+). The enzyme catalyses L-glutamine + H2O = L-glutamate + NH4(+). It functions in the pathway amino-acid biosynthesis; L-histidine biosynthesis; L-histidine from 5-phospho-alpha-D-ribose 1-diphosphate: step 5/9. IGPS catalyzes the conversion of PRFAR and glutamine to IGP, AICAR and glutamate. The HisH subunit provides the glutamine amidotransferase activity that produces the ammonia necessary to HisF for the synthesis of IGP and AICAR. This Parasynechococcus marenigrum (strain WH8102) protein is Imidazole glycerol phosphate synthase subunit HisH 2 (hisH2).